The sequence spans 347 residues: Phenylalanine--tRNA ligase alpha subunit (347 aa).

Glu-265 is a Mg(2+) binding site.

The protein belongs to the class-II aminoacyl-tRNA synthetase family. Phe-tRNA synthetase alpha subunit type 1 subfamily. In terms of assembly, tetramer of two alpha and two beta subunits. Mg(2+) is required as a cofactor.

Its subcellular location is the cytoplasm. It carries out the reaction tRNA(Phe) + L-phenylalanine + ATP = L-phenylalanyl-tRNA(Phe) + AMP + diphosphate + H(+). This Wolbachia sp. subsp. Brugia malayi (strain TRS) protein is Phenylalanine--tRNA ligase alpha subunit.